The primary structure comprises 744 residues: Photosystem I P700 chlorophyll a apoprotein A2 (744 aa).

The next 8 membrane-spanning stretches (helical) occupy residues 48 to 71, 137 to 160, 177 to 201, 275 to 293, 337 to 360, 376 to 402, 424 to 446, and 527 to 545; these read LFAT…FHIA, LYAG…LHLQ, LNHH…HVAI, MAHH…GHMY, LHFQ…QHMY, AALY…IFLV, AIIS…LYVH, and FLVH…LILV. Cys569 and Cys578 together coordinate [4Fe-4S] cluster. Helical transmembrane passes span 585–606 and 653–675; these read AFYL…YWHW and LAVW…MFLI. Chlorophyll a is bound by residues His664, Met672, and Tyr680. Residue Trp681 coordinates phylloquinone. The chain crosses the membrane as a helical span at residues 717–737; that stretch reads LVGLAHFTVGYVLTYAAFVIA.

This sequence belongs to the PsaA/PsaB family. As to quaternary structure, the PsaA/B heterodimer binds the P700 chlorophyll special pair and subsequent electron acceptors. PSI consists of a core antenna complex that captures photons, and an electron transfer chain that converts photonic excitation into a charge separation. The cyanobacterial PSI reaction center is composed of one copy each of PsaA,B,C,D,E,F,I,J,K,L,M and X, and forms trimeric complexes. PSI electron transfer chain: 5 chlorophyll a, 1 chlorophyll a', 2 phylloquinones and 3 4Fe-4S clusters. PSI core antenna: 90 chlorophyll a, 22 carotenoids, 3 phospholipids and 1 galactolipid. P700 is a chlorophyll a/chlorophyll a' dimer, A0 is one or more chlorophyll a, A1 is one or both phylloquinones and FX is a shared 4Fe-4S iron-sulfur center. is required as a cofactor.

The protein resides in the cellular thylakoid membrane. It carries out the reaction reduced [plastocyanin] + hnu + oxidized [2Fe-2S]-[ferredoxin] = oxidized [plastocyanin] + reduced [2Fe-2S]-[ferredoxin]. Functionally, psaA and PsaB bind P700, the primary electron donor of photosystem I (PSI), as well as the electron acceptors A0, A1 and FX. PSI is a plastocyanin/cytochrome c6-ferredoxin oxidoreductase, converting photonic excitation into a charge separation, which transfers an electron from the donor P700 chlorophyll pair to the spectroscopically characterized acceptors A0, A1, FX, FA and FB in turn. Oxidized P700 is reduced on the lumenal side of the thylakoid membrane by plastocyanin or cytochrome c6. The chain is Photosystem I P700 chlorophyll a apoprotein A2 from Synechococcus sp. (strain JA-2-3B'a(2-13)) (Cyanobacteria bacterium Yellowstone B-Prime).